Consider the following 199-residue polypeptide: MFISFEGTEGVGKTTLIRKIHQHFEEQGKQVVLTREPGGTPLAEQIRSMLLAVNHNENMSHDTELLLIYAARAQHLQQVILPALESNKIVLSDRFTDASFAYQCSGRGLSQDKLQLLNQNFVSSMPEVTFWLDAPIELGMNRARERGALDRFEQEKLSFFTKVREGYETLWKAEPERIKRLDATQSPDQVFEQALQYLA.

Position 7-14 (7-14 (GTEGVGKT)) interacts with ATP.

Belongs to the thymidylate kinase family.

It catalyses the reaction dTMP + ATP = dTDP + ADP. In terms of biological role, phosphorylation of dTMP to form dTDP in both de novo and salvage pathways of dTTP synthesis. The protein is Thymidylate kinase of Acinetobacter baumannii (strain AB307-0294).